Reading from the N-terminus, the 143-residue chain is Peptide methionine sulfoxide reductase MsrB (143 aa).

Positions 16 to 139 (DAELRRRLTP…NSAALNFEAK (124 aa)) constitute a MsrB domain. The Zn(2+) site is built by Cys-55, Cys-58, Cys-104, and Cys-107. The Nucleophile role is filled by Cys-128.

It belongs to the MsrB Met sulfoxide reductase family. The cofactor is Zn(2+).

It carries out the reaction L-methionyl-[protein] + [thioredoxin]-disulfide + H2O = L-methionyl-(R)-S-oxide-[protein] + [thioredoxin]-dithiol. The sequence is that of Peptide methionine sulfoxide reductase MsrB from Burkholderia thailandensis (strain ATCC 700388 / DSM 13276 / CCUG 48851 / CIP 106301 / E264).